The sequence spans 124 residues: MATVNQLVRKPRAPKVDKTNVPALDACPQKRGVCTRVYTTTPKKPNSALRKVARVRLTNGFEVTSYIGGEGHNLQEHSVILIRGGRVKDLPGVRYHTVRGALDCAGVSERRQGRSKYGAKRPKS.

Asp-89 carries the 3-methylthioaspartic acid modification.

This sequence belongs to the universal ribosomal protein uS12 family. As to quaternary structure, part of the 30S ribosomal subunit. Contacts proteins S8 and S17. May interact with IF1 in the 30S initiation complex.

Functionally, with S4 and S5 plays an important role in translational accuracy. Its function is as follows. Interacts with and stabilizes bases of the 16S rRNA that are involved in tRNA selection in the A site and with the mRNA backbone. Located at the interface of the 30S and 50S subunits, it traverses the body of the 30S subunit contacting proteins on the other side and probably holding the rRNA structure together. The combined cluster of proteins S8, S12 and S17 appears to hold together the shoulder and platform of the 30S subunit. The protein is Small ribosomal subunit protein uS12 of Shewanella sediminis (strain HAW-EB3).